Here is a 391-residue protein sequence, read N- to C-terminus: DNA repair protein NreB (391 aa).

A C4-type zinc finger spans residues Cys3 to Cys17. The PIP motif signature appears at Gln384–Met391.

This sequence belongs to the Nre family. As to quaternary structure, interacts with the DNA polymerase sliding clamp (PCNA) via the PIP (PCNA-interacting peptide) motif.

In terms of biological role, involved in DNA damage repair. The sequence is that of DNA repair protein NreB from Archaeoglobus fulgidus (strain ATCC 49558 / DSM 4304 / JCM 9628 / NBRC 100126 / VC-16).